We begin with the raw amino-acid sequence, 246 residues long: Ribonuclease PH (246 aa).

Residues 67 to 87 (NMLPGSTSPRKRRDRSGKVDG) are disordered. Residues R88 and 126 to 128 (GTR) contribute to the phosphate site.

It belongs to the RNase PH family. In terms of assembly, homohexameric ring arranged as a trimer of dimers.

It catalyses the reaction tRNA(n+1) + phosphate = tRNA(n) + a ribonucleoside 5'-diphosphate. Phosphorolytic 3'-5' exoribonuclease that plays an important role in tRNA 3'-end maturation. Removes nucleotide residues following the 3'-CCA terminus of tRNAs; can also add nucleotides to the ends of RNA molecules by using nucleoside diphosphates as substrates, but this may not be physiologically important. Probably plays a role in initiation of 16S rRNA degradation (leading to ribosome degradation) during starvation. The sequence is that of Ribonuclease PH from Rhodopirellula baltica (strain DSM 10527 / NCIMB 13988 / SH1).